Here is a 467-residue protein sequence, read N- to C-terminus: Probable serine hydroxymethyltransferase, cytosolic (467 aa).

Lys-243 is modified (N6-(pyridoxal phosphate)lysine).

This sequence belongs to the SHMT family. Homotetramer. Requires pyridoxal 5'-phosphate as cofactor.

It is found in the cytoplasm. The catalysed reaction is (6R)-5,10-methylene-5,6,7,8-tetrahydrofolate + glycine + H2O = (6S)-5,6,7,8-tetrahydrofolate + L-serine. Its pathway is one-carbon metabolism; tetrahydrofolate interconversion. In terms of biological role, interconversion of serine and glycine. The sequence is that of Probable serine hydroxymethyltransferase, cytosolic from Schizosaccharomyces pombe (strain 972 / ATCC 24843) (Fission yeast).